The primary structure comprises 349 residues: Protein-glutamate methylesterase/protein-glutamine glutaminase (349 aa).

The Response regulatory domain occupies 5 to 122 (RVLSVDDSAL…REGMLAYSEM (118 aa)). Asp-56 is subject to 4-aspartylphosphate. One can recognise a CheB-type methylesterase domain in the interval 152-344 (LLSSEKLIAI…QQMLAKISAG (193 aa)). Residues Ser-164, His-190, and Asp-286 contribute to the active site.

This sequence belongs to the CheB family. In terms of processing, phosphorylated by CheA. Phosphorylation of the N-terminal regulatory domain activates the methylesterase activity.

The protein resides in the cytoplasm. It carries out the reaction [protein]-L-glutamate 5-O-methyl ester + H2O = L-glutamyl-[protein] + methanol + H(+). The enzyme catalyses L-glutaminyl-[protein] + H2O = L-glutamyl-[protein] + NH4(+). Functionally, involved in chemotaxis. Part of a chemotaxis signal transduction system that modulates chemotaxis in response to various stimuli. Catalyzes the demethylation of specific methylglutamate residues introduced into the chemoreceptors (methyl-accepting chemotaxis proteins or MCP) by CheR. Also mediates the irreversible deamidation of specific glutamine residues to glutamic acid. The polypeptide is Protein-glutamate methylesterase/protein-glutamine glutaminase (Salmonella choleraesuis (strain SC-B67)).